The primary structure comprises 113 residues: FK506-binding protein 1B (113 aa).

Residues 19-113 (GQTVVIEYTG…IFDVYLKGLQ (95 aa)) enclose the PPIase FKBP-type domain.

Belongs to the FKBP-type PPIase family. FKBP1 subfamily.

It localises to the cytoplasm. It carries out the reaction [protein]-peptidylproline (omega=180) = [protein]-peptidylproline (omega=0). With respect to regulation, inhibited by both FK506 and rapamycin. In terms of biological role, PPIases accelerate the folding of proteins. It catalyzes the cis-trans isomerization of proline imidic peptide bonds in oligopeptides. This chain is FK506-binding protein 1B (fkr-3), found in Neurospora crassa (strain ATCC 24698 / 74-OR23-1A / CBS 708.71 / DSM 1257 / FGSC 987).